The sequence spans 396 residues: Ribosomal RNA large subunit methyltransferase I (396 aa).

The PUA domain occupies 2 to 81; that stretch reads SVRLVLAKGR…ESIDIAFFSR (80 aa).

This sequence belongs to the methyltransferase superfamily. RlmI family.

Its subcellular location is the cytoplasm. It carries out the reaction cytidine(1962) in 23S rRNA + S-adenosyl-L-methionine = 5-methylcytidine(1962) in 23S rRNA + S-adenosyl-L-homocysteine + H(+). Functionally, specifically methylates the cytosine at position 1962 (m5C1962) of 23S rRNA. The polypeptide is Ribosomal RNA large subunit methyltransferase I (Shigella flexneri).